The chain runs to 176 residues: NAD(P)H-quinone oxidoreductase subunit 6, chloroplastic (176 aa).

5 consecutive transmembrane segments (helical) span residues 10-30 (FLLV…VLLP), 32-52 (PIFS…LYIL), 61-81 (AQLL…VMFM), 92-112 (LWTV…FLLM), and 152-172 (FFLP…GAIS).

The protein belongs to the complex I subunit 6 family. In terms of assembly, NDH is composed of at least 16 different subunits, 5 of which are encoded in the nucleus.

It is found in the plastid. It localises to the chloroplast thylakoid membrane. The enzyme catalyses a plastoquinone + NADH + (n+1) H(+)(in) = a plastoquinol + NAD(+) + n H(+)(out). It catalyses the reaction a plastoquinone + NADPH + (n+1) H(+)(in) = a plastoquinol + NADP(+) + n H(+)(out). NDH shuttles electrons from NAD(P)H:plastoquinone, via FMN and iron-sulfur (Fe-S) centers, to quinones in the photosynthetic chain and possibly in a chloroplast respiratory chain. The immediate electron acceptor for the enzyme in this species is believed to be plastoquinone. Couples the redox reaction to proton translocation, and thus conserves the redox energy in a proton gradient. This chain is NAD(P)H-quinone oxidoreductase subunit 6, chloroplastic (ndhG), found in Capsella bursa-pastoris (Shepherd's purse).